The following is a 159-amino-acid chain: Transcription elongation factor GreA (159 aa).

Residues 43-75 (LSENAEYDAAREEQSQLEAKIGEIENKLASATI) are a coiled coil.

The protein belongs to the GreA/GreB family.

Necessary for efficient RNA polymerase transcription elongation past template-encoded arresting sites. The arresting sites in DNA have the property of trapping a certain fraction of elongating RNA polymerases that pass through, resulting in locked ternary complexes. Cleavage of the nascent transcript by cleavage factors such as GreA or GreB allows the resumption of elongation from the new 3'terminus. GreA releases sequences of 2 to 3 nucleotides. This is Transcription elongation factor GreA from Chlorobaculum tepidum (strain ATCC 49652 / DSM 12025 / NBRC 103806 / TLS) (Chlorobium tepidum).